We begin with the raw amino-acid sequence, 343 residues long: Ornithine carbamoyltransferase, catabolic (343 aa).

Carbamoyl phosphate is bound at residue 62 to 65 (STRT). His-79 provides a ligand contact to Ni(2+). Carbamoyl phosphate-binding positions include Gln-89, Arg-113, and 140–143 (HPTQ). Residues Asn-172, Asp-236, and 240-241 (SM) each bind L-ornithine. Carbamoyl phosphate contacts are provided by residues 278–279 (CL) and Arg-323.

It belongs to the aspartate/ornithine carbamoyltransferase superfamily. OTCase family. Homohexamer; dimer of trimers. The cofactor is Ni(2+).

It is found in the cytoplasm. The catalysed reaction is carbamoyl phosphate + L-ornithine = L-citrulline + phosphate + H(+). Its pathway is amino-acid degradation; L-arginine degradation via ADI pathway; carbamoyl phosphate from L-arginine: step 2/2. Its function is as follows. Involved in the catabolism of arginine. Catalyzes the phosphorolysis of citrulline, the reverse reaction of the biosynthetic one, yielding ornithine and carbamoyl phosphate which serve to generate ATP from ADP. In Lentilactobacillus hilgardii (Lactobacillus hilgardii), this protein is Ornithine carbamoyltransferase, catabolic.